The primary structure comprises 184 residues: dITP/XTP pyrophosphatase (184 aa).

8–13 (TGNKGK) provides a ligand contact to substrate. Mg(2+) contacts are provided by E37 and D66. D66 functions as the Proton acceptor in the catalytic mechanism. Substrate contacts are provided by residues S67, 142 to 145 (FGYD), K163, and 168 to 169 (HR).

This sequence belongs to the HAM1 NTPase family. Homodimer. Mg(2+) serves as cofactor.

It carries out the reaction XTP + H2O = XMP + diphosphate + H(+). The catalysed reaction is dITP + H2O = dIMP + diphosphate + H(+). It catalyses the reaction ITP + H2O = IMP + diphosphate + H(+). Functionally, pyrophosphatase that catalyzes the hydrolysis of nucleoside triphosphates to their monophosphate derivatives, with a high preference for the non-canonical purine nucleotides XTP (xanthosine triphosphate), dITP (deoxyinosine triphosphate) and ITP. Seems to function as a house-cleaning enzyme that removes non-canonical purine nucleotides from the nucleotide pool, thus preventing their incorporation into DNA/RNA and avoiding chromosomal lesions. The protein is dITP/XTP pyrophosphatase of Methanosarcina acetivorans (strain ATCC 35395 / DSM 2834 / JCM 12185 / C2A).